The following is a 1053-amino-acid chain: Putative ABC transporter C family member 15 (1053 aa).

Positions 1 to 180 constitute an ABC transmembrane type-1 1 domain; the sequence is MSVDVQRITD…LPDLLSALVQ (180 aa). Transmembrane regions (helical) follow at residues 11–31, 36–56, 125–145, and 151–171; these read FIWY…AIYI, LGLG…CNYP, FILW…CMLM, and AGAV…IFGL. Residues 214 to 437 form the ABC transporter 1 domain; it reads VEIENGAFSW…NIGFEVLTQC (224 aa). 249–256 contributes to the ATP binding site; that stretch reads GAVGSGKS. The next 5 helical transmembrane spans lie at 481-503, 523-543, 595-615, 714-734, and 738-758; these read LLVP…SNYW, ILLV…ARTI, MAVK…TIFV, LSHF…EGVI, and IAGL…TVIW. Positions 483-765 constitute an ABC transmembrane type-1 2 domain; that stretch reads VPFIILAQSC…VIWNICNAEN (283 aa). An ABC transporter 2 domain is found at 804–1036; sequence FRDLQVRYAE…EDSFFSKLIK (233 aa). An ATP-binding site is contributed by 836–843; the sequence is GRTGSGKS.

The protein belongs to the ABC transporter superfamily. ABCC family. Conjugate transporter (TC 3.A.1.208) subfamily.

It is found in the membrane. It catalyses the reaction ATP + H2O + xenobioticSide 1 = ADP + phosphate + xenobioticSide 2.. Functionally, pump for glutathione S-conjugates. The protein is Putative ABC transporter C family member 15 (ABCC15) of Arabidopsis thaliana (Mouse-ear cress).